A 529-amino-acid polypeptide reads, in one-letter code: Heat shock factor protein 1 (529 aa).

Met-1 is modified (N-acetylmethionine). Residues 15-120 (VPAFLTKLWT…LLENIKRKVT (106 aa)) are DNA-binding domain. Lys-80 carries the post-translational modification N6-acetyllysine. Residue Lys-91 is modified to N6-acetyllysine; alternate. A Glycyl lysine isopeptide (Lys-Gly) (interchain with G-Cter in SUMO2); alternate cross-link involves residue Lys-91. At Lys-118 the chain carries N6-acetyllysine. Ser-121 is modified (phosphoserine; by MAPKAPK2). Residues Lys-126 and Lys-131 each participate in a glycyl lysine isopeptide (Lys-Gly) (interchain with G-Cter in SUMO2) cross-link. The tract at residues 130–203 (IKIRQDSVTK…ISLVQSNRIL (74 aa)) is hydrophobic repeat HR-A/B. Thr-142 carries the phosphothreonine; by CK2 modification. Residues Lys-150 and Lys-188 each carry the N6-acetyllysine modification. Positions 203–224 (LGVKRKIPLMLNDSGSAHSMPK) are d domain. Lys-208 is subject to N6-acetyllysine; alternate. Residue Lys-208 forms a Glycyl lysine isopeptide (Lys-Gly) (interchain with G-Cter in SUMO2); alternate linkage. Ser-216 carries the phosphoserine; by PLK1 modification. The interval 221 to 310 (SMPKYSRQFS…PPSPPQSPRV (90 aa)) is regulatory domain. Lys-224 participates in a covalent cross-link: Glycyl lysine isopeptide (Lys-Gly) (interchain with G-Cter in SUMO2). Position 230 is a phosphoserine; by CAMK2A (Ser-230). Residues Ser-275 and Ser-292 each carry the phosphoserine modification. The tract at residues 295–324 (VRVKEEPPSPPQSPRVEEASPGRPSSVDTL) is disordered. Lys-298 is subject to N6-acetyllysine; alternate. A Glycyl lysine isopeptide (Lys-Gly) (interchain with G-Cter in SUMO2); alternate cross-link involves residue Lys-298. A Glycyl lysine isopeptide (Lys-Gly) (interchain with G-Cter in SUMO); alternate cross-link involves residue Lys-298. Residue Ser-303 is modified to Phosphoserine; by GSK3-beta. Phosphoserine; by MAPK3 is present on Ser-307. 2 positions are modified to phosphoserine: Ser-314 and Ser-319. Ser-320 carries the post-translational modification Phosphoserine; by PKA. Thr-323 carries the post-translational modification Phosphothreonine. Ser-326 bears the Phosphoserine; by MAPK12 mark. The disordered stretch occupies residues 336–372 (RESEPAPASVTALTDARGHTDTEGRPPSPPPTSTPEK). Ser-344 carries the post-translational modification Phosphoserine. Ser-363 bears the Phosphoserine; by MAPK8 mark. Residues 371–529 (EKCLSVACLD…PPKAKDPTVS (159 aa)) are transactivation domain. The tract at residues 384 to 409 (LSDHLDAMDSNLDNLQTMLSSHGFSV) is hydrophobic repeat HR-C. A 9aaTAD motif is present at residues 412 to 420 (SALLDLFSP). Ser-419 carries the phosphoserine; by PLK1 modification. At Ser-444 the chain carries Phosphoserine. Disordered stretches follow at residues 444–463 (SPQE…DSGK) and 502–529 (EGDG…PTVS). Lys-524 is modified (N6-acetyllysine).

It belongs to the HSF family. Monomer; cytoplasmic latent and transcriptionally inactive monomeric form in unstressed cells. Homotrimer; in response to stress, such as heat shock, homotrimerizes and translocates into the nucleus, binds to heat shock element (HSE) sequences in promoter of heat shock protein (HSP) genes and acquires transcriptional ability. Interacts (via monomeric form) with FKBP4; this interaction occurs in unstressed cells. Associates (via monomeric form) with HSP90 proteins in a multichaperone complex in unnstressed cell; this association maintains HSF1 in a non-DNA-binding and transcriptional inactive form by preventing HSF1 homotrimerization. Homotrimeric transactivation activity is modulated by protein-protein interactions and post-translational modifications. Interacts with HSP90AA1; this interaction is decreased in a IER5-dependent manner, promoting HSF1 accumulation in the nucleus, homotrimerization and DNA-binding activities. Part (via regulatory domain in the homotrimeric form) of a large heat shock-induced HSP90-dependent multichaperone complex at least composed of FKBP4, FKBP5, HSP90 proteins, PPID, PPP5C and PTGES3; this association maintains the HSF1 homotrimeric DNA-bound form in a transcriptionally inactive form. Interacts with BAG3 (via BAG domain); this interaction occurs in normal and heat-shocked cells promoting nuclear shuttling of HSF1 in a BAG3-dependent manner. Interacts (via homotrimeric and hyperphosphorylated form) with FKBP4; this interaction occurs upon heat shock in a HSP90-dependent multichaperone complex. Interacts (via homotrimeric form preferentially) with EEF1A proteins. In heat shocked cells, stress-denatured proteins compete with HSF1 homotrimeric DNA-bound form for association of the HSP90-dependent multichaperone complex, and hence alleviating repression of HSF1-mediated transcriptional activity. Interacts (via homotrimeric form preferentially) with DAXX; this interaction relieves homotrimeric HSF1 from repression of its transcriptional activity by HSP90-dependent multichaperone complex upon heat shock. Interacts (via D domain and preferentially with hyperphosphorylated form) with JNK1; this interaction occurs under both normal growth conditions and immediately upon heat shock. Interacts (via D domain and preferentially with hyperphosphorylated form) with MAPK3; this interaction occurs upon heat shock. Interacts with IER5 (via central region); this interaction promotes PPP2CA-induced dephosphorylation on Ser-121, Ser-307, Ser-314, Thr-323 and Thr-367 and HSF1 transactivation activity. Found in a ribonucleoprotein complex composed of the HSF1 homotrimeric form, translation elongation factor eEF1A proteins and non-coding RNA heat shock RNA-1 (HSR1); this complex occurs upon heat shock and stimulates HSF1 DNA-binding activity. Interacts (via transactivation domain) with HSPA1A/HSP70 and DNAJB1; these interactions result in the inhibition of heat shock- and HSF1-induced transcriptional activity during the attenuation and recovery phase from heat shock. Interacts (via Ser-303 and Ser-307 phosphorylated form) with YWHAE; this interaction promotes HSF1 sequestration in the cytoplasm in an ERK-dependent manner. Found in a complex with IER5 and PPP2CA. Interacts with TPR; this interaction increases upon heat shock and stimulates export of HSP70 mRNA. Interacts with SYMPK (via N-terminus) and CSTF2; these interactions occur upon heat shock. Interacts (via transactivation domain) with HSPA8. Interacts with EEF1D; this interaction occurs at heat shock promoter element (HSE) sequences. Interacts with MAPKAPK2. Interacts with PRKACA/PKA. Interacts (via transactivation domain) with GTF2A2. Interacts (via transactivation domain) with GTF2B. Interacts (via transactivation domain) with TBP. Interacts with CDK9, CCNT1 and EP300. Interacts (via N-terminus) with XRCC5 (via N-terminus) and XRCC6 (via N-terminus); these interactions are direct and prevent XRCC5/XRCC6 heterodimeric binding and non-homologous end joining (NHEJ) repair activities induced by ionizing radiation (IR). Interacts with PLK1; this interaction occurs during the early mitotic period, increases upon heat shock but does not modulate neither HSF1 homotrimerization and DNA-binding activities. Interacts (via Ser-216 phosphorylated form) with CDC20; this interaction occurs in mitosis in a MAD2L1-dependent manner and prevents PLK1-stimulated degradation of HSF1 by blocking the recruitment of the SCF(BTRC) ubiquitin ligase complex. Interacts with MAD2L1; this interaction occurs in mitosis. Interacts with BTRC; this interaction occurs during mitosis, induces its ubiquitin-dependent degradation following stimulus-dependent phosphorylation at Ser-216, a process inhibited by CDC20. Interacts with HSP90AA1 and HSP90AB1. Forms a complex with TTC5/STRAP and p300/EP300; these interactions augment chromatin-bound HSF1 and p300/EP300 histone acetyltransferase activity. Post-translationally, phosphorylated. Phosphorylated in unstressed cells; this phosphorylation is constitutive and implicated in the repression of HSF1 transcriptional activity. Phosphorylated on Ser-121 by MAPKAPK2; this phosphorylation promotes interaction with HSP90 proteins and inhibits HSF1 homotrimerization, DNA-binding and transactivation activities. Phosphorylation on Ser-303 by GSK3B/GSK3-beta and on Ser-307 by MAPK3 within the regulatory domain is involved in the repression of HSF1 transcriptional activity and occurs in a RAF1-dependent manner. Phosphorylation on Ser-303 and Ser-307 increases HSF1 nuclear export in a YWHAE- and XPO1/CRM1-dependent manner. Phosphorylation on Ser-307 is a prerequisite for phosphorylation on Ser-303. According to PubMed:9535852, Ser-303 is not phosphorylated in unstressed cells. Phosphorylated on Ser-419 by PLK1; phosphorylation promotes nuclear translocation upon heat shock. Hyperphosphorylated upon heat shock and during the attenuation and recovery phase period of the heat shock response. Phosphorylated on Thr-142; this phosphorylation increases HSF1 transactivation activity upon heat shock. Phosphorylation on Ser-230 by CAMK2A; this phosphorylation enhances HSF1 transactivation activity upon heat shock. Phosphorylation on Ser-326 by MAPK12; this phosphorylation enhances HSF1 nuclear translocation, homotrimerization and transactivation activities upon heat shock. Phosphorylated on Ser-320 by PRKACA/PKA; this phosphorylation promotes nuclear localization and transcriptional activity upon heat shock. Phosphorylated on Ser-363 by MAPK8; this phosphorylation occurs upon heat shock, induces HSF1 translocation into nuclear stress bodies and negatively regulates transactivation activity. Neither basal nor stress-inducible phosphorylation on Ser-230, Ser-292, Ser-303, Ser-307, Ser-314, Ser-319, Ser-320, Thr-323, Ser-326, Ser-338, Ser-344, Ser-363, Thr-367, Ser-368 and Thr-369 within the regulatory domain is involved in the regulation of HSF1 subcellular localization or DNA-binding activity; however, it negatively regulates HSF1 transactivation activity. Phosphorylated on Ser-216 by PLK1 in the early mitotic period; this phosphorylation regulates HSF1 localization to the spindle pole, the recruitment of the SCF(BTRC) ubiquitin ligase complex inducing HSF1 degradation, and hence mitotic progression. Dephosphorylated on Ser-121, Ser-307, Ser-314, Thr-323 and Thr-367 by phosphatase PPP2CA in an IER5-dependent manner, leading to HSF1-mediated transactivation activity. In terms of processing, sumoylated with SUMO1 and SUMO2 upon heat shock in a ERK2-dependent manner. Sumoylated by SUMO1 on Lys-298; sumoylation occurs upon heat shock and promotes its localization to nuclear stress bodies and DNA-binding activity. Phosphorylation on Ser-303 and Ser-307 is probably a prerequisite for sumoylation. Acetylated on Lys-118; this acetylation is decreased in a IER5-dependent manner. Acetylated on Lys-118, Lys-208 and Lys-298; these acetylations occur in a EP300-dependent manner. Acetylated on Lys-80; this acetylation inhibits DNA-binding activity upon heat shock. Deacetylated on Lys-80 by SIRT1; this deacetylation increases DNA-binding activity. Post-translationally, ubiquitinated by SCF(BTRC) and degraded following stimulus-dependent phosphorylation at Ser-216 by PLK1 in mitosis. Polyubiquitinated. Undergoes proteasomal degradation upon heat shock and during the attenuation and recovery phase period of the heat shock response.

It localises to the nucleus. The protein resides in the cytoplasm. Its subcellular location is the nucleoplasm. The protein localises to the perinuclear region. It is found in the cytoskeleton. It localises to the spindle pole. The protein resides in the microtubule organizing center. Its subcellular location is the centrosome. The protein localises to the chromosome. It is found in the centromere. It localises to the kinetochore. Functions as a stress-inducible and DNA-binding transcription factor that plays a central role in the transcriptional activation of the heat shock response (HSR), leading to the expression of a large class of molecular chaperones, heat shock proteins (HSPs), that protect cells from cellular insult damage. In unstressed cells, is present in a HSP90-containing multichaperone complex that maintains it in a non-DNA-binding inactivated monomeric form. Upon exposure to heat and other stress stimuli, undergoes homotrimerization and activates HSP gene transcription through binding to site-specific heat shock elements (HSEs) present in the promoter regions of HSP genes. Upon heat shock stress, forms a chromatin-associated complex with TTC5/STRAP and p300/EP300 to stimulate HSR transcription, therefore increasing cell survival. Activation is reversible, and during the attenuation and recovery phase period of the HSR, returns to its unactivated form. Binds to inverted 5'-NGAAN-3' pentamer DNA sequences. Binds to chromatin at heat shock gene promoters. Activates transcription of transcription factor FOXR1 which in turn activates transcription of the heat shock chaperones HSPA1A and HSPA6 and the antioxidant NADPH-dependent reductase DHRS2. Also serves several other functions independently of its transcriptional activity. Involved in the repression of Ras-induced transcriptional activation of the c-fos gene in heat-stressed cells. Positively regulates pre-mRNA 3'-end processing and polyadenylation of HSP70 mRNA upon heat-stressed cells in a symplekin (SYMPK)-dependent manner. Plays a role in nuclear export of stress-induced HSP70 mRNA. Plays a role in the regulation of mitotic progression. Also plays a role as a negative regulator of non-homologous end joining (NHEJ) repair activity in a DNA damage-dependent manner. Involved in stress-induced cancer cell proliferation in a IER5-dependent manner. Functionally, (Microbial infection) Plays a role in latent human immunodeficiency virus (HIV-1) transcriptional reactivation. Binds to the HIV-1 long terminal repeat promoter (LTR) to reactivate viral transcription by recruiting cellular transcriptional elongation factors, such as CDK9, CCNT1 and EP300. The protein is Heat shock factor protein 1 of Homo sapiens (Human).